The primary structure comprises 1083 residues: Solute carrier family 12 member 7 (1083 aa).

The segment at 1–52 (MPTNFTVVPVEAHADGGGDETAERTEAPGTPEGPEPERPSPGDGNPRENSPF) is disordered. Over 1–119 (MPTNFTVVPV…RREAKAPRMG (119 aa)) the chain is Cytoplasmic. Residues 12 to 26 (AHADGGGDETAERTE) are compositionally biased toward basic and acidic residues. Position 30 is a phosphothreonine (Thr-30). Residues Ser-50 and Ser-62 each carry the phosphoserine modification. The discontinuously helical transmembrane segment at 120–142 (TFIGVYLPCLQNILGVILFLRLT) threads the bilayer. K(+) is bound by residues Asn-131 and Ile-132. Val-135 is a chloride binding site. The Extracellular segment spans residues 143–149 (WIVGVAG). Residues 150-172 (VLESFLIVAMCCTCTMLTAISMS) form a helical membrane-spanning segment. Residues 173–196 (AIATNGVVPAGGSYYMISRSLGPE) are Cytoplasmic-facing. A helical membrane pass occupies residues 197-225 (FGGAVGLCFYLGTTFAGAMYILGTIEIFL). Over 226 to 249 (TYISPGAAIFQAEAAGGEAAAMLH) the chain is Extracellular. Helical transmembrane passes span 250-270 (NMRV…FVGV) and 272-300 (YVNK…KSAF). The Extracellular segment spans residues 301–419 (DPPDIPVCLL…PYVLTDIAAS (119 aa)). Disulfide bonds link Cys-308-Cys-323 and Cys-343-Cys-352. N-linked (GlcNAc...) asparagine glycosylation is present at Asn-312. Asn-360 carries N-linked (GlcNAc...) asparagine glycosylation. The chain crosses the membrane as a helical span at residues 420 to 440 (FTLLVGIYFPSVTGIMAGSNR). Positions 429 and 432 each coordinate K(+). Pro-429 provides a ligand contact to chloride. Chloride contacts are provided by Gly-433 and Ile-434. The Cytoplasmic portion of the chain corresponds to 441 to 450 (SGDLKDAQKS). The chain crosses the membrane as a helical span at residues 451 to 473 (IPTGTILAIVTTSFIYLSCIVLF). At 474–504 (GACIEGVVLRDKFGEALQGNLVIGMLAWPSP) the chain is on the extracellular side. Residues 505 to 531 (WVIVIGSFFSTCGAGLQSLTGAPRLLQ) form a helical membrane-spanning segment. Residues 532-554 (AIARDGIVPFLQVFGHGKANGEP) lie on the Cytoplasmic side of the membrane. A run of 2 helical transmembrane segments spans residues 555–571 (TWAL…GILI) and 574–598 (LDSV…ACAV). Chloride is bound at residue Tyr-589. At 599–612 (QTLLRTPNWRPRFK) the chain is on the cytoplasmic side. A run of 2 helical transmembrane segments spans residues 613 to 632 (FYHW…LMFI) and 636 to 651 (YYAL…IYKY). Residues 652 to 1083 (IEYRGAEKEW…GGREVITIYS (432 aa)) lie on the Cytoplasmic side of the membrane. The segment at 664 to 680 (GIRGLSLNAARYALLRV) is scissor helix. Thr-973 and Thr-980 each carry phosphothreonine.

Belongs to the SLC12A transporter family. K/Cl co-transporter subfamily. Homodimer; adopts a domain-swap conformation at the scissor helices connecting the transmembrane domain and C-terminal domain. Heterodimer with K-Cl cotransporter SLC12A5. As to expression, detected in muscle, brain, lung, heart and kidney.

The protein resides in the cell membrane. The enzyme catalyses K(+)(in) + chloride(in) = K(+)(out) + chloride(out). Its activity is regulated as follows. Activated by N-ethylmaleimide (NEM). Inhibited by furosemide, DIDS and bumetanide. The inhibition is much stronger in the presence of 50 mM K(+) in the uptake medium. Inhibited by DIOA. Inhibited by WNK3. In terms of biological role, mediates electroneutral potassium-chloride cotransport when activated by cell swelling. May mediate K(+) uptake into Deiters' cells in the cochlea and contribute to K(+) recycling in the inner ear. Important for the survival of cochlear outer and inner hair cells and the maintenance of the organ of Corti. May be required for basolateral Cl(-) extrusion in the kidney and contribute to renal acidification. This is Solute carrier family 12 member 7 from Homo sapiens (Human).